The primary structure comprises 271 residues: Putative hydro-lyase Mrad2831_3350 (271 aa).

The protein belongs to the D-glutamate cyclase family.

The sequence is that of Putative hydro-lyase Mrad2831_3350 from Methylobacterium radiotolerans (strain ATCC 27329 / DSM 1819 / JCM 2831 / NBRC 15690 / NCIMB 10815 / 0-1).